The following is a 385-amino-acid chain: 3-dehydroquinate synthase (385 aa).

NAD(+) is bound by residues Gly122–Asp126, Thr146–Thr147, Lys159, and Lys168. Residues Glu201, His264, and His282 each contribute to the Zn(2+) site.

This sequence belongs to the sugar phosphate cyclases superfamily. Dehydroquinate synthase family. It depends on Co(2+) as a cofactor. Zn(2+) serves as cofactor. NAD(+) is required as a cofactor.

Its subcellular location is the cytoplasm. The enzyme catalyses 7-phospho-2-dehydro-3-deoxy-D-arabino-heptonate = 3-dehydroquinate + phosphate. The protein operates within metabolic intermediate biosynthesis; chorismate biosynthesis; chorismate from D-erythrose 4-phosphate and phosphoenolpyruvate: step 2/7. Catalyzes the conversion of 3-deoxy-D-arabino-heptulosonate 7-phosphate (DAHP) to dehydroquinate (DHQ). This chain is 3-dehydroquinate synthase, found in Rhodospirillum rubrum (strain ATCC 11170 / ATH 1.1.1 / DSM 467 / LMG 4362 / NCIMB 8255 / S1).